The following is a 161-amino-acid chain: Peroxynitrite isomerase 2 (161 aa).

Positions 17–23 (GTWAGQG) match the GXWXGXG motif. His152 is a heme b binding site.

It belongs to the nitrobindin family. Homodimer. Heme b is required as a cofactor.

It carries out the reaction peroxynitrite = nitrate. It participates in nitrogen metabolism. Its function is as follows. Heme-binding protein able to scavenge peroxynitrite and to protect free L-tyrosine against peroxynitrite-mediated nitration, by acting as a peroxynitrite isomerase that converts peroxynitrite to nitrate. Therefore, this protein likely plays a role in peroxynitrite sensing and in the detoxification of reactive nitrogen and oxygen species (RNS and ROS, respectively). Is able to bind nitric oxide (NO) in vitro, but may act as a sensor of peroxynitrite levels in vivo. The polypeptide is Peroxynitrite isomerase 2 (Mycobacterium ulcerans (strain Agy99)).